The following is a 155-amino-acid chain: Endoribonuclease YbeY (155 aa).

The Zn(2+) site is built by His117, His121, and His127.

The protein belongs to the endoribonuclease YbeY family. It depends on Zn(2+) as a cofactor.

It is found in the cytoplasm. Single strand-specific metallo-endoribonuclease involved in late-stage 70S ribosome quality control and in maturation of the 3' terminus of the 16S rRNA. In Treponema denticola (strain ATCC 35405 / DSM 14222 / CIP 103919 / JCM 8153 / KCTC 15104), this protein is Endoribonuclease YbeY.